Reading from the N-terminus, the 1436-residue chain is ABC transporter C family member 15 (1436 aa).

7 helical membrane passes run 8 to 28 (IINK…IYLY), 129 to 149 (YIAT…PLIL), 165 to 185 (IYIG…NMAS), 238 to 258 (FFQY…IQIL), 261 to 281 (LGFL…VMLI), 349 to 369 (IIYW…VLVS), and 373 to 393 (TYTL…ITIL). An ABC transmembrane type-1 1 domain is found at 128–412 (NYIATGLFVF…LPDCLHKFIS (285 aa)). The ABC transporter 1 domain maps to 543-766 (ADYQDLLSIN…IDFEMILKEK (224 aa)). An ATP-binding site is contributed by 575–582 (GGVRSGKT). The region spanning 865-1155 (KKYIRMGSSI…FMRQFGELES (291 aa)) is the ABC transmembrane type-1 2 domain. 6 consecutive transmembrane segments (helical) span residues 873 to 893 (SISF…ILLL), 919 to 939 (LIYL…YLLI), 985 to 1005 (IDIL…CLVT), 1017 to 1039 (IAIP…NYSV), 1101 to 1121 (IGIR…LFSI), and 1127 to 1147 (GLSA…NWFM). The ABC transporter 2 domain maps to 1193–1426 (IEFKNVEIRY…STSRFSKLIK (234 aa)). Position 1227-1234 (1227-1234 (GRSGSGKS)) interacts with ATP.

This sequence belongs to the ABC transporter superfamily. ABCC family. Conjugate transporter (TC 3.A.1.208) subfamily.

It is found in the membrane. This chain is ABC transporter C family member 15 (abcC15), found in Dictyostelium discoideum (Social amoeba).